Consider the following 454-residue polypeptide: L-cysteine desulfhydrase-like protein lolT1 (454 aa).

Lysine 227 bears the N6-(pyridoxal phosphate)lysine mark.

This sequence belongs to the class-V pyridoxal-phosphate-dependent aminotransferase family. It depends on pyridoxal 5'-phosphate as a cofactor.

The protein operates within alkaloid biosynthesis. Functionally, L-cysteine desulfhydrase-like protein; part of the gene cluster that mediates the biosynthesis of loline alkaloids, potent insecticidal agents composed of a pyrrolizidine ring system and an uncommon ether bridge linking carbons 2 and 7. Lolines are structurally differentiated by the various modifications of the L-amino group and include norloline, loline, N-methylloline, N-acetylloline, N-acetylnorloline, and N-formylloline. The first committed step is the condensation of O-acetyl-L-homoserine (derived from L-aspartic acid) and L-proline, probably catalyzed by the gamma-type pyridoxal 5'-phosphate(PLP)-dependent enzyme lolC, to give the diamino diacid, NACPP. Ensuing cyclization, decarboxylation, and acetylation steps yield 1-exo-acetamidopyrrolizidine (AcAP). LolO is required for installation of the ether bridge upon the pathway intermediate, 1-exo-acetamidopyrrolizidine (AcAP). In sequential 2-oxoglutarate- and O(2)-consuming steps, lolO removes hydrogens from C2 and C7 of AcAP to form both carbon-oxygen bonds in N-acetylnorloline (NANL), the precursor to all other lolines. The enzymes lolD, lolE, lolF and lolT have also been proposed to be involved in the ether-bridge installation. Further processing of the exocyclic moiety of NANL by fungal N-acetamidase (LolN), methyltransferase (LolM), and cytochrome P450 (LolP) enzymes, with occasional involvement of a plant acetyltransferase, generates the other known lolines. LolN transforms NANL to norlonine which is monomethylated and dimethylated to respectively lonine and N-methyllonine (NML) by lolM. LolP catalyzes hydroxylation of the methyl group in N-methylloline (NML) and further oxygenation to N-formylloline (NFL). A plant acetyltransferase is responsible for the acetylation of loline to form N-acetylloline (NAL). LolA might interact with aspartate kinase to prevent feedback inhibition of its activity by these end products and thereby promote production of L-homoserine from L-aspartate. In Epichloe uncinata (Endophyte fungus), this protein is L-cysteine desulfhydrase-like protein lolT1.